The following is a 36-amino-acid chain: Photosystem I reaction center subunit VIII (36 aa).

The helical transmembrane segment at 8–28 (SLFVPLVGLVFPAIAMASLFL) threads the bilayer.

This sequence belongs to the PsaI family.

The protein resides in the plastid. Its subcellular location is the chloroplast thylakoid membrane. Its function is as follows. May help in the organization of the PsaL subunit. This is Photosystem I reaction center subunit VIII from Brassica oleracea (Wild cabbage).